Here is a 340-residue protein sequence, read N- to C-terminus: Melanin-concentrating hormone receptor 2 (340 aa).

Residues 1 to 39 (MNPFHASCWNTSAELLNKSWNKEFAYQTASVVDTVILPS) lie on the Extracellular side of the membrane. N-linked (GlcNAc...) asparagine glycans are attached at residues Asn10 and Asn17. Residues 40-60 (MIGIICSTGLVGNILIVFTII) traverse the membrane as a helical segment. The Cytoplasmic segment spans residues 61-69 (RSRKKTVPD). A helical transmembrane segment spans residues 70–90 (IYICNLAVADLVHIVGMPFLI). Over 91 to 104 (HQWARGGEWVFGGP) the chain is Extracellular. The chain crosses the membrane as a helical span at residues 105–129 (LCTIITSLDTCNQFACSAIMTVMSV). The Cytoplasmic portion of the chain corresponds to 130 to 154 (DRYFALVQPFRLTRWRTRYKTIRIN). The chain crosses the membrane as a helical span at residues 155–175 (LGLWAASFILALPVWVYSKVI). Residues 176–200 (KFKDGVESCAFDLTSPDDVLWYTLY) lie on the Extracellular side of the membrane. Residues 201–221 (LTITTFFFPLPLILVCYILIL) traverse the membrane as a helical segment. Over 222 to 252 (CYTWEMYQQNKDARCCNPSVPKQRVMKLTKM) the chain is Cytoplasmic. Residues 253–273 (VLVLVVVFILSAAPYHVIQLV) traverse the membrane as a helical segment. The Extracellular portion of the chain corresponds to 274 to 288 (NLQMEQPTLAFYVGY). The helical transmembrane segment at 289 to 309 (YLSICLSYASSSINPFLYILL) threads the bilayer. The Cytoplasmic segment spans residues 310–340 (SGNFQKRLPQIQRRATEKEINNMGNTLKSHF).

The protein belongs to the G-protein coupled receptor 1 family. Specifically expressed in the brain, with highest levels in cerebral cortex, hippocampus and amygdala. No expression detected in the cerebellum, thalamus or hypothalamus.

The protein localises to the cell membrane. Functionally, receptor for melanin-concentrating hormone, coupled to G proteins that activate phosphoinositide hydrolysis. This Homo sapiens (Human) protein is Melanin-concentrating hormone receptor 2 (MCHR2).